The chain runs to 350 residues: Mannonate dehydratase (350 aa).

The protein belongs to the mannonate dehydratase family. Fe(2+) serves as cofactor. Requires Mn(2+) as cofactor.

The enzyme catalyses D-mannonate = 2-dehydro-3-deoxy-D-gluconate + H2O. The protein operates within carbohydrate metabolism; pentose and glucuronate interconversion. In terms of biological role, catalyzes the dehydration of D-mannonate. This chain is Mannonate dehydratase, found in Clostridium perfringens (strain 13 / Type A).